A 72-amino-acid chain; its full sequence is MFIDELSPIFKQLVQHPASFLGGFASGVLRLNLADDPVKSWLDKQRGVNSYSFPVTDAHNGKASGPQSISID.

This sequence belongs to the UPF0426 family.

The sequence is that of UPF0426 protein asl4034 from Nostoc sp. (strain PCC 7120 / SAG 25.82 / UTEX 2576).